We begin with the raw amino-acid sequence, 747 residues long: E3 UFM1-protein ligase 1 homolog (747 aa).

The segment at 403 to 468 is disordered; it reads EKKKQCGSKA…GTVQVNSEEL (66 aa). A compositionally biased stretch (basic residues) spans 429-438; it reads GGKGGKKGGK. Residues 439-449 are compositionally biased toward gly residues; sequence GGKNGGGGGKG. A compositionally biased stretch (polar residues) spans 450-465; that stretch reads ATSSVPTGSGTVQVNS.

It belongs to the UFL1 family.

E3 UFM1-protein ligase that mediates ufmylation of target proteins. This Caenorhabditis briggsae protein is E3 UFM1-protein ligase 1 homolog (ufl-1).